The chain runs to 184 residues: Cathelicidin-related peptide Pt_CRAMP1 (184 aa).

The signal sequence occupies residues Met1–Ser22. Residues Leu23–Val150 constitute a propeptide that is removed on maturation. Disulfide bonds link Cys81/Cys92 and Cys103/Cys120. The segment covering Glu125–Lys144 has biased composition (acidic residues). The tract at residues Glu125 to Pro147 is disordered.

This sequence belongs to the cathelicidin family. As to expression, expressed by the venom gland.

It is found in the secreted. It localises to the target cell membrane. In terms of biological role, potent antimicrobial peptide against Gram-negative (MIC=2 ug/ml against E.coli ATCC 25922, MIC=8 ug/ml against P.aeruginosa) and Gram-positive bacteria (MIC=32 ug/ml against E.faecalis, MIC=32 ug/ml against S.aureus). Adopts an amphipathic alpha helical conformation, that may allow to partition into the target membrane. High hemolytic activities have been observed on mammalian cells. The chain is Cathelicidin-related peptide Pt_CRAMP1 from Pseudonaja textilis (Eastern brown snake).